The primary structure comprises 454 residues: Bifunctional protein GlmU (454 aa).

The interval 1 to 233 is pyrophosphorylase; the sequence is MTNRTCLAVI…RESAVGINNR (233 aa). UDP-N-acetyl-alpha-D-glucosamine is bound by residues 11–14, K25, Q79, and 84–85; these read LAAG and GT. D109 serves as a coordination point for Mg(2+). 4 residues coordinate UDP-N-acetyl-alpha-D-glucosamine: G145, E159, N174, and N231. A Mg(2+)-binding site is contributed by N231. Residues 234–254 form a linker region; that stretch reads AELAEAEAVWQQKRRRELMLS. The segment at 255 to 454 is N-acetyltransferase; sequence GVTLIAPETV…AEEKAKKSGG (200 aa). Residues R320 and K338 each contribute to the UDP-N-acetyl-alpha-D-glucosamine site. Residue H350 is the Proton acceptor of the active site. The UDP-N-acetyl-alpha-D-glucosamine site is built by Y353 and N364. Residues A367, 373–374, S410, and R427 contribute to the acetyl-CoA site; that span reads NY.

In the N-terminal section; belongs to the N-acetylglucosamine-1-phosphate uridyltransferase family. This sequence in the C-terminal section; belongs to the transferase hexapeptide repeat family. As to quaternary structure, homotrimer. The cofactor is Mg(2+).

The protein resides in the cytoplasm. The enzyme catalyses alpha-D-glucosamine 1-phosphate + acetyl-CoA = N-acetyl-alpha-D-glucosamine 1-phosphate + CoA + H(+). It catalyses the reaction N-acetyl-alpha-D-glucosamine 1-phosphate + UTP + H(+) = UDP-N-acetyl-alpha-D-glucosamine + diphosphate. Its pathway is nucleotide-sugar biosynthesis; UDP-N-acetyl-alpha-D-glucosamine biosynthesis; N-acetyl-alpha-D-glucosamine 1-phosphate from alpha-D-glucosamine 6-phosphate (route II): step 2/2. It participates in nucleotide-sugar biosynthesis; UDP-N-acetyl-alpha-D-glucosamine biosynthesis; UDP-N-acetyl-alpha-D-glucosamine from N-acetyl-alpha-D-glucosamine 1-phosphate: step 1/1. The protein operates within bacterial outer membrane biogenesis; LPS lipid A biosynthesis. Functionally, catalyzes the last two sequential reactions in the de novo biosynthetic pathway for UDP-N-acetylglucosamine (UDP-GlcNAc). The C-terminal domain catalyzes the transfer of acetyl group from acetyl coenzyme A to glucosamine-1-phosphate (GlcN-1-P) to produce N-acetylglucosamine-1-phosphate (GlcNAc-1-P), which is converted into UDP-GlcNAc by the transfer of uridine 5-monophosphate (from uridine 5-triphosphate), a reaction catalyzed by the N-terminal domain. The chain is Bifunctional protein GlmU from Chelativorans sp. (strain BNC1).